Here is a 182-residue protein sequence, read N- to C-terminus: Adenine phosphoribosyltransferase (182 aa).

Belongs to the purine/pyrimidine phosphoribosyltransferase family. In terms of assembly, homodimer.

It is found in the cytoplasm. It carries out the reaction AMP + diphosphate = 5-phospho-alpha-D-ribose 1-diphosphate + adenine. It participates in purine metabolism; AMP biosynthesis via salvage pathway; AMP from adenine: step 1/1. Its function is as follows. Catalyzes a salvage reaction resulting in the formation of AMP, that is energically less costly than de novo synthesis. This is Adenine phosphoribosyltransferase from Stutzerimonas stutzeri (strain A1501) (Pseudomonas stutzeri).